Reading from the N-terminus, the 181-residue chain is Cyclic AMP-dependent transcription factor ATF-3 (181 aa).

The disordered stretch occupies residues 73–97; it reads EMSVTKSEAAPEEDERKRRRRERNK. Lys78 participates in a covalent cross-link: Glycyl lysine isopeptide (Lys-Gly) (interchain with G-Cter in SUMO2). Positions 86 to 149 constitute a bZIP domain; it reads DERKRRRRER…QHLIYMLNLH (64 aa). The segment at 88 to 110 is basic motif; sequence RKRRRRERNKIAAAKCRNKKKEK. The leucine-zipper stretch occupies residues 114–142; that stretch reads LQKESEKLESVNAELKAQIEELKNEKQHL. Phosphothreonine is present on Thr162. A Glycyl lysine isopeptide (Lys-Gly) (interchain with G-Cter in SUMO2) cross-link involves residue Lys175.

Belongs to the bZIP family. ATF subfamily. In terms of assembly, binds DNA as a homodimer or a heterodimer. Interacts with KAT5; promoting KAT5 autoacetylation and KAT5 deubiquitination by USP7.

Its subcellular location is the nucleus. In terms of biological role, this protein binds the cAMP response element (CRE) (consensus: 5'-GTGACGT[AC][AG]-3'), a sequence present in many viral and cellular promoters. Represses transcription from promoters with ATF sites. It may repress transcription by stabilizing the binding of inhibitory cofactors at the promoter. The polypeptide is Cyclic AMP-dependent transcription factor ATF-3 (Mus musculus (Mouse)).